The chain runs to 58 residues: UPF0391 membrane protein Bxeno_A2959 (58 aa).

The next 2 helical transmembrane spans lie at 4–24 (WALFFAVVAVIAGVLGFTGVA) and 33–53 (FLFIVFVILCVVFLVLGFVVT).

The protein belongs to the UPF0391 family.

The protein localises to the cell membrane. This Paraburkholderia xenovorans (strain LB400) protein is UPF0391 membrane protein Bxeno_A2959.